A 235-amino-acid chain; its full sequence is Elongation factor Tu (235 aa).

In terms of domain architecture, tr-type G spans 1-125; the sequence is KNMITGATQM…DGDKYIPTPS (125 aa). Residue 47–50 participates in GTP binding; sequence NKQD.

The protein belongs to the TRAFAC class translation factor GTPase superfamily. Classic translation factor GTPase family. EF-Tu/EF-1A subfamily. As to quaternary structure, monomer.

It is found in the cytoplasm. The catalysed reaction is GTP + H2O = GDP + phosphate + H(+). Functionally, GTP hydrolase that promotes the GTP-dependent binding of aminoacyl-tRNA to the A-site of ribosomes during protein biosynthesis. The protein is Elongation factor Tu (tufA) of Leptolyngbya boryana (Plectonema boryanum).